The primary structure comprises 387 residues: Probable 1-alkyl-2-acetylglycerophosphocholine esterase (387 aa).

Residues 1–17 (MLVQGTIICALVANAIA) form the signal peptide. Residues N51 and N141 are each glycosylated (N-linked (GlcNAc...) asparagine). S227 functions as the Nucleophile in the catalytic mechanism. The Charge relay system role is filled by D250. N283 carries N-linked (GlcNAc...) asparagine glycosylation. H313 (charge relay system) is an active-site residue.

It belongs to the AB hydrolase superfamily. Lipase family.

Its subcellular location is the secreted. It catalyses the reaction a 1-O-alkyl-2-acetyl-sn-glycero-3-phosphocholine + H2O = a 1-O-alkyl-sn-glycero-3-phosphocholine + acetate + H(+). This is Probable 1-alkyl-2-acetylglycerophosphocholine esterase from Arthroderma benhamiae (strain ATCC MYA-4681 / CBS 112371) (Trichophyton mentagrophytes).